The sequence spans 255 residues: MWKDNRISEVFIKKKGIGMIALADIPANTLIMKELPISIVKINNQTVSDIFQILYDVLSDPNKKSLFEKFLPNSINEFESHRNNLMKEFHKLKKSRLNNVYQFINNNFTSDEILLYGAKYMCNAFEFNNGSAILINGAKFNHSCVPNVIFVSDENYMYFYTVRNIKTGEELTDNYVDIMSNTKTRKNRLFNQYGFDCQCERCIGSDKLFYQEVEKIQSSKFYFSNQISVNHRKKLQQNSKNLKKNPKKTIKATPK.

Residues Asn5–Val176 form the SET domain. The tract at residues Leu235 to Lys255 is disordered.

It belongs to the class V-like SAM-binding methyltransferase superfamily.

This chain is Putative SET domain-containing protein L678, found in Acanthamoeba polyphaga mimivirus (APMV).